We begin with the raw amino-acid sequence, 943 residues long: MSNTTVEQFAAELKRPVEDLLKQLKEAGVSKNSGSDSLTLDDKQLLNAYLTKKNGSNGGTISIRRTKTEVSTVDGVKVETRKRGRTVNIPSAEELAAQVKAAQTQAAPVQPEQTAEDAVKARAEAAARAEARAKAEAEAAKLKAAKAGNKAKPAAQKPTEAKAETAPVAAETKPAEPKEKAVKPKHERNGKGKDAKKPAKPAAPAVPQPVVSAEEQAQRDEEARRAAALRAHQEALLKEKQERQARREAMKQQAEQQAKAAQEAKTGRQRPAKPAEKPQAAAPAVENKPVNPAKAKKEDRRNRDDEGQGRNAKGKGAKGGRDRNNARNGGDERVRGGKKGKKLKLEPNQHAFQAPTEPVVHEVLVPETITVADLAHKMAVKGVEVVKALMKMGMMVTINQSIDQDTALIVVEELGHIGKPAAADDPEAFLGEGAEAVEAEALPRPPVVTVMGHVDHGKTSLLDYIRRAKVVQGEAGGITQHIGAYHVKTPRGVITFLDTPGHEAFTAMRARGAKATDIVILVVAADDGVMPQTIEAIAHAKAAGVPIVVAVNKIDKDTANPERIRQELTQHEVIPDDWGGTVQFIDVSAKKGTNIDALLEAVLLEAEVLELTAPVDAPAKGIIVEARLDKGRGAVATLLVQNGTLKKGDMLLAGTAFGKIRAMVDENGKSITEAGPSIPVEILGLSDVPNAGEDAMVLADEKKAREIALFRQGKYRDVRLAKQQAAKLENMFNNMGETQAQSLSVIIKADVQGSYEALAGSLKKLSADEVKVNVLHSGVGGITESDVNLAIASGAFIIGFNVRADASSRKLAENENVEIRYYNIIYDAIDDVKAAMSGMLSPEKKEQVTGTVEIRQVISVSKVGNIAGCMVTDGVVKRDSHIRLIRNNVVIHTGELASLKRYKDDVKEVRMGFECGLMLKGYNEIMEGDQLECFDIVEVARTL.

Positions 99 to 113 (VKAAQTQAAPVQPEQ) are enriched in low complexity. The disordered stretch occupies residues 99–354 (VKAAQTQAAP…LEPNQHAFQA (256 aa)). Over residues 117 to 141 (DAVKARAEAAARAEARAKAEAEAAK) the composition is skewed to basic and acidic residues. Residues 145 to 172 (AKAGNKAKPAAQKPTEAKAETAPVAAET) show a composition bias toward low complexity. The span at 173–197 (KPAEPKEKAVKPKHERNGKGKDAKK) shows a compositional bias: basic and acidic residues. Residues 200-215 (KPAAPAVPQPVVSAEE) are compositionally biased toward low complexity. Over residues 216 to 250 (QAQRDEEARRAAALRAHQEALLKEKQERQARREAM) the composition is skewed to basic and acidic residues. The segment covering 251–264 (KQQAEQQAKAAQEA) has biased composition (low complexity). 2 stretches are compositionally biased toward basic and acidic residues: residues 295–308 (AKKE…DEGQ) and 319–335 (GGRD…ERVR). Residues 443–612 (PRPPVVTVMG…LLEAEVLELT (170 aa)) form the tr-type G domain. The tract at residues 452 to 459 (GHVDHGKT) is G1. Position 452–459 (452–459 (GHVDHGKT)) interacts with GTP. Positions 477–481 (GITQH) are G2. The segment at 498-501 (DTPG) is G3. GTP contacts are provided by residues 498–502 (DTPGH) and 552–555 (NKID). Positions 552-555 (NKID) are G4. The interval 588–590 (SAK) is G5.

This sequence belongs to the TRAFAC class translation factor GTPase superfamily. Classic translation factor GTPase family. IF-2 subfamily.

It localises to the cytoplasm. Its function is as follows. One of the essential components for the initiation of protein synthesis. Protects formylmethionyl-tRNA from spontaneous hydrolysis and promotes its binding to the 30S ribosomal subunits. Also involved in the hydrolysis of GTP during the formation of the 70S ribosomal complex. The chain is Translation initiation factor IF-2 from Neisseria gonorrhoeae (strain NCCP11945).